A 395-amino-acid chain; its full sequence is S-adenosylmethionine synthase (395 aa).

His14 lines the ATP pocket. A Mg(2+)-binding site is contributed by Asp16. Glu42 contacts K(+). Positions 55 and 98 each coordinate L-methionine. Positions 98–108 are flexible loop; sequence QSPDIALGVDK. ATP-binding positions include 174 to 176, 240 to 241, Asp249, 255 to 256, Ala272, and Lys276; these read DGK, RF, and RK. Asp249 serves as a coordination point for L-methionine. Lys280 serves as a coordination point for L-methionine.

It belongs to the AdoMet synthase family. Homotetramer; dimer of dimers. Mg(2+) serves as cofactor. Requires K(+) as cofactor.

It localises to the cytoplasm. It carries out the reaction L-methionine + ATP + H2O = S-adenosyl-L-methionine + phosphate + diphosphate. It functions in the pathway amino-acid biosynthesis; S-adenosyl-L-methionine biosynthesis; S-adenosyl-L-methionine from L-methionine: step 1/1. In terms of biological role, catalyzes the formation of S-adenosylmethionine (AdoMet) from methionine and ATP. The overall synthetic reaction is composed of two sequential steps, AdoMet formation and the subsequent tripolyphosphate hydrolysis which occurs prior to release of AdoMet from the enzyme. The sequence is that of S-adenosylmethionine synthase from Thermotoga maritima (strain ATCC 43589 / DSM 3109 / JCM 10099 / NBRC 100826 / MSB8).